A 920-amino-acid chain; its full sequence is Neurofibromin-A (920 aa).

One can recognise a Ras-GAP domain in the interval 63 to 291; that stretch reads NKTLPLIKDL…EKMSAYFNLI (229 aa). 2 disordered regions span residues 344–405 and 477–508; these read KWLA…TTTA and LGPS…GASM. Residues 346-369 are compositionally biased toward polar residues; sequence LATTPSGNTPSPAISNASSAHNGK. Low complexity predominate over residues 370-405; the sequence is SNNTTNNNNNNNNNNNNNNNNNNNNNNNSNKTTTTA. Polar residues predominate over residues 498–507; the sequence is PTTSLQNGAS. The 162-residue stretch at 512-673 folds into the CRAL-TRIO domain; that stretch reads FDECTHMLER…TSKDFITKSY (162 aa).

Its function is as follows. Regulator of the GTPase activity of Ras, mainly RasG and RasB. This chain is Neurofibromin-A (nfaA), found in Dictyostelium discoideum (Social amoeba).